A 445-amino-acid polypeptide reads, in one-letter code: Phosphoglucosamine mutase (445 aa).

Ser-102 functions as the Phosphoserine intermediate in the catalytic mechanism. Residues Ser-102, Asp-241, Asp-243, and Asp-245 each coordinate Mg(2+). Residue Ser-102 is modified to Phosphoserine.

This sequence belongs to the phosphohexose mutase family. Mg(2+) is required as a cofactor. Post-translationally, activated by phosphorylation.

It carries out the reaction alpha-D-glucosamine 1-phosphate = D-glucosamine 6-phosphate. Its function is as follows. Catalyzes the conversion of glucosamine-6-phosphate to glucosamine-1-phosphate. This Escherichia coli O127:H6 (strain E2348/69 / EPEC) protein is Phosphoglucosamine mutase.